The primary structure comprises 48 residues: Protein YodE (48 aa).

In Escherichia coli (strain K12), this protein is Protein YodE.